A 1114-amino-acid polypeptide reads, in one-letter code: Zinc finger E-box-binding homeobox 1 (1114 aa).

2 disordered regions span residues 1–105 (MADG…EVGC) and 142–163 (APEEDQRQGTPEASGQDENGTP). Residues 15 to 30 (PRRNNVTNYNNVIEAN) are compositionally biased toward low complexity. Over residues 149 to 160 (QGTPEASGQDEN) the composition is skewed to polar residues. C2H2-type zinc fingers lie at residues 170–193 (LTCPYCDRGYKRFTSLKEHIKYRH), 200–222 (FSCSLCSYTFAYRTQLDRHMTSH), and 240–262 (FKCTECGKAFKYKHHLKEHLRIH). Residues 268–292 (YECPNCKKRFSHSGSYSSHISSKKC) form a C2H2-type 4; atypical zinc finger. Disordered stretches follow at residues 304–326 (SGLKTSQCSSPSLSASPGSPARP), 491–529 (NLKKEHSVPTNSCKNEKLPEDLTVKSEKDKNFEGETNDS), 553–588 (KNPPQLPQSSGTEAEKPSSPAPSETGENNLSPGQPP), and 636–716 (QISV…SRNS). Over residues 309-326 (SQCSSPSLSASPGSPARP) the composition is skewed to low complexity. Over residues 504–523 (KNEKLPEDLTVKSEKDKNFE) the composition is skewed to basic and acidic residues. Polar residues-rich tracts occupy residues 573 to 584 (APSETGENNLSP) and 636 to 681 (QISV…QNPA). The homeobox; atypical DNA-binding region spans 581-640 (NLSPGQPPLKNLLSLLKAYYALNAQPSAEELSKIADSVNLPLDVVKKWFEKMQAGQISVQ). Residues 682-716 (NTSKSQTSSGGSTQNGSRSSTPSPSPLNLSSSRNS) show a composition bias toward low complexity. The CTBP-binding motif motif lies at 767–771 (PLNLT). 2 stretches are compositionally biased toward polar residues: residues 852-866 (AVQETPPKQTQANGS) and 874-890 (SSEGVSNVEDQNDSDST). The interval 852-898 (AVQETPPKQTQANGSQDERQDTSSEGVSNVEDQNDSDSTPPKKKMRK) is disordered. 2 C2H2-type zinc fingers span residues 904–926 (YACDLCDKIFQKSSSLLRHKYEH) and 932–954 (HECGICKKAFKHKHHLIEHMRLH). The C2H2-type 7; atypical zinc-finger motif lies at 960–981 (YQCDKCGKRFSHSGSYSQHMNH). A disordered region spans residues 989 to 1114 (EAEERDSTEQ…QVSEEKTNKA (126 aa)). A compositionally biased stretch (acidic residues) spans 1031-1047 (EEEEDSEKEEEEEEEKD). Basic and acidic residues predominate over residues 1048–1062 (VEGLQEEKECRKLQD). Acidic residues predominate over residues 1063 to 1078 (VEEEEEVEEEEEEEEG). Positions 1079–1089 (KTEGNKNDDVV) are enriched in basic and acidic residues.

Belongs to the delta-EF1/ZFH-1 C2H2-type zinc-finger family. In terms of tissue distribution, expression is developmentally regulated with high expression in mesoderm, nervous system and lens.

It is found in the nucleus. In terms of biological role, acts as a transcriptional repressor. Positively regulates neuronal differentiation. Represses transcription by binding to the E box-containing promoter. Binds to delta 1-crystallin enhancer core and represses lens-specific transcription. It also binds many other non-lens specific DNA sequences. This chain is Zinc finger E-box-binding homeobox 1 (ZEB1), found in Gallus gallus (Chicken).